The primary structure comprises 491 residues: Angiopoietin-related protein 1 (491 aa).

Residues 1 to 23 (MKAFIWTLSVLFFLLMGIGHGRG) form the signal peptide. The stretch at 80–168 (ITRMDLENLK…LNVTTEMLKM (89 aa)) forms a coiled coil. N-linked (GlcNAc...) asparagine glycans are attached at residues Asn-160 and Asn-188. The Fibrinogen C-terminal domain occupies 271 to 491 (FINEGPYKDC…AVQMLIKPID (221 aa)). 2 cysteine pairs are disulfide-bonded: Cys-280–Cys-309 and Cys-432–Cys-445.

It is found in the secreted. The polypeptide is Angiopoietin-related protein 1 (ANGPTL1) (Bos taurus (Bovine)).